Consider the following 345-residue polypeptide: D-fructose 1,6-bisphosphatase class 2/sedoheptulose 1,7-bisphosphatase (345 aa).

4 residues coordinate Mn(2+): D33, E57, D97, and E100. Substrate contacts are provided by residues 100 to 102 (EGT), Y131, 176 to 178 (RPR), and 198 to 200 (DGD). E225 contributes to the Mn(2+) binding site.

This sequence belongs to the FBPase class 2 family. Homotetramer. It depends on Mn(2+) as a cofactor.

The enzyme catalyses beta-D-fructose 1,6-bisphosphate + H2O = beta-D-fructose 6-phosphate + phosphate. It carries out the reaction D-sedoheptulose 1,7-bisphosphate + H2O = D-sedoheptulose 7-phosphate + phosphate. It participates in carbohydrate biosynthesis; Calvin cycle. Inhibited by AMP and slightly innibited by hydrogen peroxyde. In terms of biological role, catalyzes the hydrolysis of fructose 1,6-bisphosphate (Fru 1,6-P2) and sedoheptulose 1,7-bisphosphate (Sed 1,7-P2) to fructose 6-phosphate and sedoheptulose 7-phosphate, respectively. The polypeptide is D-fructose 1,6-bisphosphatase class 2/sedoheptulose 1,7-bisphosphatase (Synechococcus elongatus (strain ATCC 33912 / PCC 7942 / FACHB-805) (Anacystis nidulans R2)).